Here is a 314-residue protein sequence, read N- to C-terminus: Melanoma-associated antigen 3 (314 aa).

Over residues 1 to 20 the composition is skewed to basic and acidic residues; that stretch reads MPLEQRSQHCKPEEGLEARG. The disordered stretch occupies residues 1–99; sequence MPLEQRSQHC…QEEEGPSTFP (99 aa). A compositionally biased stretch (low complexity) spans 21-44; that stretch reads EALGLVGAQAPATEEQEAASSSST. Residues 65 to 87 show a composition bias toward polar residues; the sequence is PQGASSLPTTMNYPLWSQSYEDS. In terms of domain architecture, MAGE spans 109–308; that stretch reads LSRKVAELVH…ISYPPLHEWV (200 aa).

As to quaternary structure, interacts with TRIM28. Post-translationally, ubiquitinated by the DCX(DCAF12) complex specifically recognizes the diglutamate (Glu-Glu) at the C-terminus, leading to its degradation. Expressed in many tumors of several types, such as melanoma, head and neck squamous cell carcinoma, lung carcinoma and breast carcinoma, but not in normal tissues except for testes and placenta. Never expressed in kidney tumors, Leukemias and lymphomas.

Functionally, activator of ubiquitin ligase activity of RING-type zinc finger-containing E3 ubiquitin-protein ligases that acts as a repressor of autophagy. May enhance ubiquitin ligase activity of TRIM28 and stimulate p53/TP53 ubiquitination by TRIM28. Proposed to act through recruitment and/or stabilization of the Ubl-conjugating enzyme (E2) at the E3:substrate complex. May play a role in embryonal development and tumor transformation or aspects of tumor progression. In vitro promotes cell viability in melanoma cell lines. Antigen recognized on a melanoma by autologous cytolytic T-lymphocytes. The sequence is that of Melanoma-associated antigen 3 from Homo sapiens (Human).